Here is a 365-residue protein sequence, read N- to C-terminus: F-box protein At1g48060 (365 aa).

The tract at residues 1 to 20 (MKPQEEEEKNENMARKRSKS) is disordered. Residues 20–69 (SSSSLSIPLDIATDIFLRLPAKSVVRFSCVAKHWSSITTAPYFTNSFETR) form the F-box domain.

The protein is F-box protein At1g48060 of Arabidopsis thaliana (Mouse-ear cress).